The sequence spans 302 residues: Sulfate adenylyltransferase subunit 2 (302 aa).

It belongs to the PAPS reductase family. CysD subfamily. Heterodimer composed of CysD, the smaller subunit, and CysN.

It carries out the reaction sulfate + ATP + H(+) = adenosine 5'-phosphosulfate + diphosphate. It participates in sulfur metabolism; hydrogen sulfide biosynthesis; sulfite from sulfate: step 1/3. Its function is as follows. With CysN forms the ATP sulfurylase (ATPS) that catalyzes the adenylation of sulfate producing adenosine 5'-phosphosulfate (APS) and diphosphate, the first enzymatic step in sulfur assimilation pathway. APS synthesis involves the formation of a high-energy phosphoric-sulfuric acid anhydride bond driven by GTP hydrolysis by CysN coupled to ATP hydrolysis by CysD. This is Sulfate adenylyltransferase subunit 2 from Salmonella arizonae (strain ATCC BAA-731 / CDC346-86 / RSK2980).